A 408-amino-acid chain; its full sequence is LL-diaminopimelate aminotransferase (408 aa).

Positions 15 and 42 each coordinate substrate. Pyridoxal 5'-phosphate-binding positions include tyrosine 72, 108-109 (AK), tyrosine 132, asparagine 186, tyrosine 217, and 245-247 (SFS). Residues lysine 109, tyrosine 132, and asparagine 186 each contribute to the substrate site. N6-(pyridoxal phosphate)lysine is present on lysine 248. Pyridoxal 5'-phosphate is bound by residues arginine 256 and asparagine 291. Residues asparagine 291 and arginine 386 each coordinate substrate.

Belongs to the class-I pyridoxal-phosphate-dependent aminotransferase family. LL-diaminopimelate aminotransferase subfamily. Homodimer. It depends on pyridoxal 5'-phosphate as a cofactor.

It catalyses the reaction (2S,6S)-2,6-diaminopimelate + 2-oxoglutarate = (S)-2,3,4,5-tetrahydrodipicolinate + L-glutamate + H2O + H(+). The protein operates within amino-acid biosynthesis; L-lysine biosynthesis via DAP pathway; LL-2,6-diaminopimelate from (S)-tetrahydrodipicolinate (aminotransferase route): step 1/1. Its function is as follows. Involved in the synthesis of meso-diaminopimelate (m-DAP or DL-DAP), required for both lysine and peptidoglycan biosynthesis. Catalyzes the direct conversion of tetrahydrodipicolinate to LL-diaminopimelate. In Desulfotalea psychrophila (strain LSv54 / DSM 12343), this protein is LL-diaminopimelate aminotransferase.